The primary structure comprises 178 residues: MGDPRRLGKKYDTPNHPWIGERIQSEREISQKYGLVNKKELWKMETQLRNYRRQARKLISDTTTQGGKEAVQLFNVLKRYAILVEQEPTLDHVLSLNIESILERRLQTMVYKKGLAKTAKQARQFIVHGHIAVNGKRVTSPSYLVSVAENDAIEYVPNSPMASENHPERTAAVSEENQ.

Residues 104 to 166 (RRLQTMVYKK…PNSPMASENH (63 aa)) enclose the S4 RNA-binding domain. A disordered region spans residues 157–178 (PNSPMASENHPERTAAVSEENQ).

This sequence belongs to the universal ribosomal protein uS4 family. Part of the 30S ribosomal subunit. Contacts protein S5. The interaction surface between S4 and S5 is involved in control of translational fidelity.

Its function is as follows. One of the primary rRNA binding proteins, it binds directly to 16S rRNA where it nucleates assembly of the body of the 30S subunit. In terms of biological role, with S5 and S12 plays an important role in translational accuracy. The polypeptide is Small ribosomal subunit protein uS4 (Methanococcus maripaludis (strain C7 / ATCC BAA-1331)).